The following is a 355-amino-acid chain: IgG receptor FcRn large subunit p51 (355 aa).

The signal sequence occupies residues 1 to 24; it reads MRVPRSQPWGLALLLLLLPGTLRA. The segment at 25–111 is alpha-1; it reads AESHRSLLYH…ALKVFGDRDS (87 aa). Topologically, residues 25 to 300 are extracellular; it reads AESHRSLLYH…LESPAKSSVP (276 aa). The tract at residues 112–201 is alpha-2; that stretch reads YTLQGLLGCE…ERGRGNLEWK (90 aa). N126 is a glycosylation site (N-linked (GlcNAc...) asparagine). The tract at residues 202-291 is alpha-3; sequence EPPSMRLKAR…GPAQPLTVEL (90 aa). The 90-residue stretch at 203–292 folds into the Ig-like C1-type domain; that stretch reads PPSMRLKARP…PAQPLTVELE (90 aa). C222 and C276 are joined by a disulfide. The interval 293–298 is connecting peptide; the sequence is SPAKSS. A helical transmembrane segment spans residues 301–321; the sequence is VIGISIGFLLLMTVAAGGALL. The Cytoplasmic segment spans residues 322 to 355; it reads WRRRKGLPAPWIAFRGDDIGALLPTPGLSKDAES.

The protein belongs to the immunoglobulin superfamily. In terms of assembly, fcRn complex consists of two subunits: p51, and p14 which is equivalent to beta-2-microglobulin. It forms an MHC class I-like heterodimer. Interacts with albumin/ALB; this interaction regulates ALB homeostasis. As to expression, expressed in liver and mammary gland of non-lactating animals. Expressed in hepatocytes and in epithelial cells of portal bile ductuli. Not expressed in the brances of portal veins or hepatic arteries. Expressed in the epithelial cells of the acini and ducti in the mammary gland with expression emphasized at the apical side. Not expressed in blood vessels of mammary gland.

It is found in the cell membrane. It localises to the endosome membrane. Functionally, cell surface receptor that transfers passive humoral immunity from the mother to the newborn. Binds to the Fc region of monomeric immunoglobulin gamma and mediates its selective uptake from milk. IgG in the milk is bound at the apical surface of the intestinal epithelium. The resultant FcRn-IgG complexes are transcytosed across the intestinal epithelium and IgG is released from FcRn into blood or tissue fluids. Throughout life, contributes to effective humoral immunity by recycling IgG and extending its half-life in the circulation. Mechanistically, monomeric IgG binding to FcRn in acidic endosomes of endothelial and hematopoietic cells recycles IgG to the cell surface where it is released into the circulation. In addition of IgG, regulates homeostasis of the other most abundant circulating protein albumin/ALB. The sequence is that of IgG receptor FcRn large subunit p51 from Camelus dromedarius (Dromedary).